Reading from the N-terminus, the 24-residue chain is Brevinin-1BYc (24 aa).

C18 and C24 form a disulfide bridge.

Expressed by the skin glands.

It localises to the secreted. In terms of biological role, antibacterial activity against Gram-positive bacterium S.aureus. Weak antifungal activity against C.albicans. The sequence is that of Brevinin-1BYc from Rana boylii (Foothill yellow-legged frog).